Reading from the N-terminus, the 775-residue chain is Tumor necrosis factor alpha-induced protein 3 (775 aa).

Ala2 is modified (N-acetylalanine). The segment at 58 to 300 (PQFREIIHKA…LTDPENEMKE (243 aa)) is TRAF-binding. Residues 92 to 263 (LVALKTNGDG…SQHFVPLVTL (172 aa)) form the OTU domain. Asp100 is a catalytic residue. Cys103 (nucleophile) is an active-site residue. Interaction with ubiquitin stretches follow at residues 157-159 (LCY), 190-192 (SLE), and 224-227 (FAPL). His256 functions as the Proton acceptor in the catalytic mechanism. An interaction with TNIP1 region spans residues 369 to 775 (AQNPLEPSTP…ECYQFKQMYG (407 aa)). The A20-type 1 zinc finger occupies 381–416 (SLMDIKCETPNCPFFMSVNTQPLCHECSERRQKNQS). The interval 386–445 (KCETPNCPFFMSVNTQPLCHECSERRQKNQSKLPKLNSKLGPEGLPGVGLGSSNWSPEET) is interaction with RIPK1. Zn(2+) is bound by residues Cys387, Cys392, Cys404, and Cys407. Residues 415–455 (QSKLPKLNSKLGPEGLPGVGLGSSNWSPEETAGGPHSAPPT) are disordered. Ser451 carries the phosphoserine modification. 2 consecutive A20-type zinc fingers follow at residues 464-499 (ETTAMKCRSPGCPFTLNVQHNGFCERCHARQINASH) and 500-533 (TADPGKCQACLQDVTRTFNGICSTCFKRTTAEPS). Zn(2+)-binding residues include Cys470, Cys475, Cys487, Cys490, Cys506, Cys509, Cys521, and Cys524. Over residues 567–580 (TGNVSPSGCLSQAA) the composition is skewed to polar residues. The disordered stretch occupies residues 567-590 (TGNVSPSGCLSQAARTPGDRAGTS). 4 consecutive A20-type zinc fingers follow at residues 586–621 (RAGTSKCRKAGCMYFGTPENKGFCTLCFIEYRENKQ), 636–671 (FQNNVPCLGRECGTLGSTMFEGYCQKCFIEAQNQRF), 695–730 (VASRLKCARASCKNILACRSEELCMECQHLSQRVGS), and 741–775 (EPPKQRCRAPACDHFGNAKCNGYCNECYQFKQMYG). Residues 590 to 640 (SKCRKAGCMYFGTPENKGFCTLCFIEYRENKQSVTASEKAGSPAPRFQNNV) form a required for proteasomal degradation of UBE2N and UBE2D3, TRAF6 deubiquitination, and TAX1BP1 interaction with UBE2N region. Positions 591-775 (KCRKAGCMYF…ECYQFKQMYG (185 aa)) are sufficient for inhibitory activity of TNF-induced NF-kappa-B activity. Residues Cys592, Cys597, Cys609, Cys612, Cys642, Cys647, Cys659, Cys662, Cys701, Cys706, Cys718, Cys721, Cys747, Cys752, Cys764, and Cys767 each coordinate Zn(2+). The interval 682–775 (RSSQHRDMPR…ECYQFKQMYG (94 aa)) is required for lysosomal localization and for TRAF2 lysosomal degradation.

Belongs to the peptidase C64 family. Homodimer. Interacts with TNIP1, TAX1BP1 and TRAF2. Interacts with RNF11, ITCH and TAX1BP1 only after TNF stimulation; these interaction are transient and they are lost after 1 hour of stimulation with TNF. Interacts with YWHAZ and YWHAH. Interacts with IKBKG; the interaction is induced by TNF stimulation and by polyubiquitin. Interacts with RIPK1. Interacts with UBE2N; the interaction requires TAX1BP1. Interacts with TRAF6. In terms of tissue distribution, found in most tissues during development. Strikingly high levels are found in lymphoid organs, including the thymus, spleen, and gut-associated lymphoid tissue. Constitutively expressed in immature and mature thymocyte subpopulations as well as in resting peripheral T-cells; activation of these leads to down-regulation.

The protein resides in the cytoplasm. The protein localises to the nucleus. Its subcellular location is the lysosome. The catalysed reaction is Thiol-dependent hydrolysis of ester, thioester, amide, peptide and isopeptide bonds formed by the C-terminal Gly of ubiquitin (a 76-residue protein attached to proteins as an intracellular targeting signal).. In terms of biological role, ubiquitin-editing enzyme that contains both ubiquitin ligase and deubiquitinase activities. Involved in immune and inflammatory responses signaled by cytokines, such as TNF-alpha and IL-1 beta, or pathogens via Toll-like receptors (TLRs) through terminating NF-kappa-B activity. Essential component of a ubiquitin-editing protein complex, comprising also RNF11, ITCH and TAX1BP1, that ensures the transient nature of inflammatory signaling pathways. In cooperation with TAX1BP1 promotes disassembly of E2-E3 ubiquitin protein ligase complexes in IL-1R and TNFR-1 pathways; affected are at least E3 ligases TRAF6, TRAF2 and BIRC2, and E2 ubiquitin-conjugating enzymes UBE2N and UBE2D3. In cooperation with TAX1BP1 promotes ubiquitination of UBE2N and proteasomal degradation of UBE2N and UBE2D3. Upon TNF stimulation, deubiquitinates 'Lys-63'-polyubiquitin chains on RIPK1 and catalyzes the formation of 'Lys-48'-polyubiquitin chains. This leads to RIPK1 proteasomal degradation and consequently termination of the TNF- or LPS-mediated activation of NF-kappa-B. Deubiquitinates TRAF6 probably acting on 'Lys-63'-linked polyubiquitin. Upon T-cell receptor (TCR)-mediated T-cell activation, deubiquitinates 'Lys-63'-polyubiquitin chains on MALT1 thereby mediating disassociation of the CBM (CARD11:BCL10:MALT1) and IKK complexes and preventing sustained IKK activation. Deubiquitinates NEMO/IKBKG; the function is facilitated by TNIP1 and leads to inhibition of NF-kappa-B activation. Upon stimulation by bacterial peptidoglycans, probably deubiquitinates RIPK2. Can also inhibit I-kappa-B-kinase (IKK) through a non-catalytic mechanism which involves polyubiquitin; polyubiquitin promotes association with IKBKG and prevents IKK MAP3K7-mediated phosphorylation. Targets TRAF2 for lysosomal degradation. In vitro able to deubiquitinate 'Lys-11'-, 'Lys-48'- and 'Lys-63' polyubiquitin chains. Inhibitor of programmed cell death. Has a role in the function of the lymphoid system. Required for LPS-induced production of pro-inflammatory cytokines and IFN beta in LPS-tolerized macrophages. This chain is Tumor necrosis factor alpha-induced protein 3 (Tnfaip3), found in Mus musculus (Mouse).